Reading from the N-terminus, the 370-residue chain is 4-hydroxy-3-methylbut-2-en-1-yl diphosphate synthase (flavodoxin) (370 aa).

[4Fe-4S] cluster is bound by residues Cys-268, Cys-271, Cys-303, and Glu-310.

Belongs to the IspG family. [4Fe-4S] cluster is required as a cofactor.

It catalyses the reaction (2E)-4-hydroxy-3-methylbut-2-enyl diphosphate + oxidized [flavodoxin] + H2O + 2 H(+) = 2-C-methyl-D-erythritol 2,4-cyclic diphosphate + reduced [flavodoxin]. It participates in isoprenoid biosynthesis; isopentenyl diphosphate biosynthesis via DXP pathway; isopentenyl diphosphate from 1-deoxy-D-xylulose 5-phosphate: step 5/6. Its function is as follows. Converts 2C-methyl-D-erythritol 2,4-cyclodiphosphate (ME-2,4cPP) into 1-hydroxy-2-methyl-2-(E)-butenyl 4-diphosphate. The chain is 4-hydroxy-3-methylbut-2-en-1-yl diphosphate synthase (flavodoxin) from Bacillus pumilus (strain SAFR-032).